The chain runs to 431 residues: Serine/threonine-protein kinase SSN3 (431 aa).

The Protein kinase domain occupies 27–355 (YQIIGYIAAG…ADNALVHPYF (329 aa)). ATP-binding positions include 33-41 (IAAGTYGKV) and Lys59. Asp174 functions as the Proton acceptor in the catalytic mechanism. The interval 397-431 (RHGGAYDDQHNNSNNNTNNSLNANNANNVPRKRAR) is disordered. A compositionally biased stretch (low complexity) spans 407–424 (NNSNNNTNNSLNANNANN).

It belongs to the protein kinase superfamily. CMGC Ser/Thr protein kinase family. CDC2/CDKX subfamily. As to quaternary structure, component of the srb8-11 complex, a regulatory module of the Mediator complex. It depends on Mg(2+) as a cofactor.

The protein localises to the nucleus. The catalysed reaction is L-seryl-[protein] + ATP = O-phospho-L-seryl-[protein] + ADP + H(+). It catalyses the reaction L-threonyl-[protein] + ATP = O-phospho-L-threonyl-[protein] + ADP + H(+). The enzyme catalyses [DNA-directed RNA polymerase] + ATP = phospho-[DNA-directed RNA polymerase] + ADP + H(+). In terms of biological role, component of the srb8-11 complex. The srb8-11 complex is a regulatory module of the Mediator complex which is itself dependent transcription. The srb8-11 complex may be involved in the transcriptional repression of a subset of genes regulated by Mediator. It may inhibit the association of the Mediator complex with RNA polymerase II to form the holoenzyme complex. The srb8-11 complex phosphorylates the C-terminal domain (CTD) of the largest subunit of RNA polymerase II. This Scheffersomyces stipitis (strain ATCC 58785 / CBS 6054 / NBRC 10063 / NRRL Y-11545) (Yeast) protein is Serine/threonine-protein kinase SSN3 (SSN3).